The primary structure comprises 381 residues: Chaperone protein DnaJ (381 aa).

The J domain occupies aspartate 5–glycine 70. A CR-type zinc finger spans residues glycine 136–threonine 214. Residues cysteine 149, cysteine 152, cysteine 166, cysteine 169, cysteine 188, cysteine 191, cysteine 202, and cysteine 205 each contribute to the Zn(2+) site. CXXCXGXG motif repeat units lie at residues cysteine 149–glycine 156, cysteine 166–glycine 173, cysteine 188–glycine 195, and cysteine 202–glycine 209.

Belongs to the DnaJ family. Homodimer. The cofactor is Zn(2+).

The protein localises to the cytoplasm. Its function is as follows. Participates actively in the response to hyperosmotic and heat shock by preventing the aggregation of stress-denatured proteins and by disaggregating proteins, also in an autonomous, DnaK-independent fashion. Unfolded proteins bind initially to DnaJ; upon interaction with the DnaJ-bound protein, DnaK hydrolyzes its bound ATP, resulting in the formation of a stable complex. GrpE releases ADP from DnaK; ATP binding to DnaK triggers the release of the substrate protein, thus completing the reaction cycle. Several rounds of ATP-dependent interactions between DnaJ, DnaK and GrpE are required for fully efficient folding. Also involved, together with DnaK and GrpE, in the DNA replication of plasmids through activation of initiation proteins. This is Chaperone protein DnaJ from Vibrio campbellii (strain ATCC BAA-1116).